A 65-amino-acid polypeptide reads, in one-letter code: Large ribosomal subunit protein bL35 (65 aa).

The disordered stretch occupies residues 1–22; sequence MPKIKTLRSAAKRFKKTASGKF. The span at 10–22 shows a compositional bias: basic residues; sequence AAKRFKKTASGKF.

It belongs to the bacterial ribosomal protein bL35 family.

The protein is Large ribosomal subunit protein bL35 of Buchnera aphidicola subsp. Schizaphis graminum (strain Sg).